Reading from the N-terminus, the 591-residue chain is Laccase (591 aa).

Positions 1–20 are cleaved as a signal peptide; it reads MPSFFRALFSGLIASQLSWA. Plastocyanin-like domains lie at 66 to 189 and 198 to 356; these read VRQY…IQID and IDLG…HPTN. N-linked (GlcNAc...) asparagine glycosylation occurs at Asn-121. Residues His-126, His-128, His-171, and His-173 each coordinate Cu cation. 2 disulfide bridges follow: Cys-147/Cys-571 and Cys-332/Cys-366. Asn-234, Asn-242, Asn-265, and Asn-323 each carry an N-linked (GlcNAc...) asparagine glycan. N-linked (GlcNAc...) asparagine glycans are attached at residues Asn-407 and Asn-425. Positions 416-551 constitute a Plastocyanin-like 3 domain; sequence GHPITQYVIN…AGLGNTFLEQ (136 aa). Residues His-463, His-466, His-468, His-533, Cys-534, His-535, and His-539 each coordinate Cu cation.

It belongs to the multicopper oxidase family. The cofactor is Cu cation.

It localises to the secreted. The catalysed reaction is 4 hydroquinone + O2 = 4 benzosemiquinone + 2 H2O. In terms of biological role, lignin degradation and detoxification of lignin-derived products. The polypeptide is Laccase (LAC-1) (Cryphonectria parasitica (Chestnut blight fungus)).